The chain runs to 335 residues: Nucleoid-associated protein CKO_00588 (335 aa).

This sequence belongs to the YejK family.

The protein resides in the cytoplasm. Its subcellular location is the nucleoid. In Citrobacter koseri (strain ATCC BAA-895 / CDC 4225-83 / SGSC4696), this protein is Nucleoid-associated protein CKO_00588.